The sequence spans 238 residues: Acyl-protein thioesterase 1 (238 aa).

Residues S120, D174, and H219 each act as charge relay system in the active site.

It belongs to the AB hydrolase superfamily. AB hydrolase 2 family.

The protein resides in the cytoplasm. It is found in the nucleus. The catalysed reaction is S-hexadecanoyl-L-cysteinyl-[protein] + H2O = L-cysteinyl-[protein] + hexadecanoate + H(+). Hydrolyzes fatty acids from S-acylated cysteine residues in proteins with a strong preference for palmitoylated G-alpha proteins over other acyl substrates. Mediates the deacylation of G-alpha proteins such as GPA1 in vivo, but has weak or no activity toward palmitoylated Ras proteins. Has weak lysophospholipase activity in vitro; however such activity may not exist in vivo. The protein is Acyl-protein thioesterase 1 of Cryptococcus neoformans var. neoformans serotype D (strain B-3501A) (Filobasidiella neoformans).